A 219-amino-acid polypeptide reads, in one-letter code: Ribose-5-phosphate isomerase A (219 aa).

Residues S28 to T31, D81 to D84, and K94 to G97 contribute to the substrate site. The active-site Proton acceptor is E103. A substrate-binding site is contributed by K121.

Belongs to the ribose 5-phosphate isomerase family. Homodimer.

The catalysed reaction is aldehydo-D-ribose 5-phosphate = D-ribulose 5-phosphate. It participates in carbohydrate degradation; pentose phosphate pathway; D-ribose 5-phosphate from D-ribulose 5-phosphate (non-oxidative stage): step 1/1. In terms of biological role, catalyzes the reversible conversion of ribose-5-phosphate to ribulose 5-phosphate. The protein is Ribose-5-phosphate isomerase A of Haemophilus ducreyi (strain 35000HP / ATCC 700724).